The primary structure comprises 178 residues: Ribosome maturation factor RimM (178 aa).

The PRC barrel domain maps to Ala-101–Phe-178.

Belongs to the RimM family. As to quaternary structure, binds ribosomal protein uS19.

It is found in the cytoplasm. In terms of biological role, an accessory protein needed during the final step in the assembly of 30S ribosomal subunit, possibly for assembly of the head region. Essential for efficient processing of 16S rRNA. May be needed both before and after RbfA during the maturation of 16S rRNA. It has affinity for free ribosomal 30S subunits but not for 70S ribosomes. The polypeptide is Ribosome maturation factor RimM (Pseudomonas putida (strain ATCC 700007 / DSM 6899 / JCM 31910 / BCRC 17059 / LMG 24140 / F1)).